The following is a 358-amino-acid chain: Replication-associated protein (358 aa).

The region spanning 7 to 115 (RVQAKNVFLT…DGDTVEWGQF (109 aa)) is the CRESS-DNA virus Rep endonuclease domain. An RCR-1 motif is present at residues 14 to 17 (FLTY). The a divalent metal cation site is built by Glu48, His56, and His58. Residues 56–58 (HLH) carry the RCR-2 motif. The active-site For DNA cleavage activity is the Tyr102. The RCR-3 signature appears at 102-105 (YLDK). Asp106 provides a ligand contact to a divalent metal cation. The segment at 142 to 152 (KSEALNVIREL) is binding to RBR1. Residues 155-175 (KDFVLQFHNLNSNLDRIFQEP) form an oligomerization region. 220–227 (GDSRTGKT) provides a ligand contact to ATP.

The protein belongs to the geminiviridae Rep protein family. Homooligomer. Interacts with the replication enhancer protein (REn). Interacts with host retinoblastoma-related protein 1 (RBR1), and may thereby induce the transcription of host replicative enzymes even if the cell is not dividing anymore. Interacts with host PCNA. Interacts with host SCE1 protein. Mg(2+) serves as cofactor. It depends on Mn(2+) as a cofactor.

The protein localises to the host nucleus. Its function is as follows. Essential for the replication of viral ssDNA. The closed circular ssDNA genome is first converted to a superhelical dsDNA. Rep binds a specific region at the genome origin of replication. It introduces an endonucleolytic nick within the conserved sequence 5'-TAATATTAC-3' in the intergenic region of the genome present in all geminiviruses, thereby initiating the rolling circle replication (RCR). Following cleavage, binds covalently to the 5'-phosphate of DNA as a tyrosyl ester. The cleavage gives rise to a free 3'-OH that serves as a primer for the cellular DNA polymerase. The polymerase synthesizes the (+) strand DNA by rolling circle mechanism. After one round of replication, a Rep-catalyzed nucleotidyl transfer reaction releases a circular single-stranded virus genome, thereby terminating the replication. Displays origin-specific DNA cleavage, nucleotidyl transferase, ATPase and helicase activities. This chain is Replication-associated protein, found in Hewittia sublobata (Coralbush).